We begin with the raw amino-acid sequence, 41 residues long: ORF3c protein (41 aa).

Functionally, may play a role in host modulation. The protein is ORF3c protein of Severe acute respiratory syndrome coronavirus 2 (2019-nCoV).